A 187-amino-acid chain; its full sequence is MALPCSFSVALVLLSCHSLCCLACHLPDTHSLRNWRVLTLLGQMRRLSASSCDHYTTDFAFPKELFDGQRLQEAQALSVVHVMTQKVFHLFCTNTSSAPWNMTLLEELCSGLSEQLDDLDACPLQEAGLAETPLMHEDSTLRTYFQRISLYLQDRNHSPCAWEMVRAEIGRSFFSLTILQERVRRRK.

The signal sequence occupies residues 1–23; it reads MALPCSFSVALVLLSCHSLCCLA. Intrachain disulfides connect Cys-24/Cys-122 and Cys-52/Cys-160. Asn-94 and Asn-101 each carry an N-linked (GlcNAc...) asparagine glycan.

The protein belongs to the alpha/beta interferon family.

It is found in the secreted. Functionally, produced by macrophages, IFN-alpha have antiviral activities. Interferon stimulates the production of two enzymes: a protein kinase and an oligoadenylate synthetase. This is Interferon alpha-3 from Canis lupus familiaris (Dog).